The chain runs to 1277 residues: Myosin-1 (1277 aa).

A compositionally biased stretch (basic residues) spans Met1 to Pro13. The segment at Met1–Lys27 is disordered. A Myosin motor domain is found at Val39 to Asp718. An ATP-binding site is contributed by Gly132–Thr139. A Phosphoserine modification is found at Ser360. Residues Ile407–Ala489 form an actin-binding region. A disordered region spans residues Leu567–Ile587. 2 consecutive IQ domains span residues His722–Cys742 and Ala743–Gln768. The region spanning Arg776–Ala965 is the TH1 domain. Disordered regions lie at residues Tyr952–Glu1072 and Pro1129–Gln1259. Over residues Pro1015–Ser1056 the composition is skewed to low complexity. Residues Val1057–Arg1068 show a composition bias toward pro residues. The SH3 domain maps to Pro1071 to Pro1129. The segment covering Ala1132 to Pro1142 has biased composition (pro residues). Composition is skewed to polar residues over residues Thr1145 to Asp1159 and Ala1185 to Pro1197. Over residues Val1204 to Pro1224 the composition is skewed to pro residues. The segment covering Pro1226–Pro1240 has biased composition (low complexity). Gly residues predominate over residues Ser1241–Gly1258.

It belongs to the TRAFAC class myosin-kinesin ATPase superfamily. Myosin family. Phosphorylation of the TEDS site (Ser-360) is required for the polarization of the actin cytoskeleton. Phosphorylation probably activates the myosin-I ATPase activity.

Its subcellular location is the cytoplasm. The protein resides in the cytoskeleton. It localises to the actin patch. In terms of biological role, type-I myosin implicated in the organization of the actin cytoskeleton. Required for proper actin cytoskeleton polarization. At the cell cortex, assembles in patch-like structures together with proteins from the actin-polymerizing machinery and promotes actin assembly. Functions as actin nucleation-promoting factor (NPF) for the Arp2/3 complex. In Coprinopsis cinerea (strain Okayama-7 / 130 / ATCC MYA-4618 / FGSC 9003) (Inky cap fungus), this protein is Myosin-1 (MYO1).